The following is a 239-amino-acid chain: Orotidine 5'-phosphate decarboxylase (239 aa).

Substrate is bound by residues Asp-10, Lys-33, 60–69, Thr-124, Arg-186, Gln-195, Gly-215, and Arg-216; that span reads DLKLYDIPNT. Lys-62 functions as the Proton donor in the catalytic mechanism.

The protein belongs to the OMP decarboxylase family. Type 1 subfamily. In terms of assembly, homodimer.

The catalysed reaction is orotidine 5'-phosphate + H(+) = UMP + CO2. Its pathway is pyrimidine metabolism; UMP biosynthesis via de novo pathway; UMP from orotate: step 2/2. In terms of biological role, catalyzes the decarboxylation of orotidine 5'-monophosphate (OMP) to uridine 5'-monophosphate (UMP). The protein is Orotidine 5'-phosphate decarboxylase of Latilactobacillus sakei subsp. sakei (strain 23K) (Lactobacillus sakei subsp. sakei).